Consider the following 196-residue polypeptide: Adenylate kinase (196 aa).

ATP is bound at residue 9 to 17 (GIPGVGKST).

Belongs to the archaeal adenylate kinase family.

The protein localises to the cytoplasm. It carries out the reaction AMP + ATP = 2 ADP. This is Adenylate kinase from Pyrococcus furiosus (strain ATCC 43587 / DSM 3638 / JCM 8422 / Vc1).